A 224-amino-acid chain; its full sequence is Heme response regulator HssR (224 aa).

Residues 3 to 116 (KCLIVDDDYK…ELLFRIQAVL (114 aa)) form the Response regulatory domain. The residue at position 52 (D52) is a 4-aspartylphosphate. The segment at residues 124–222 (QDIIKLGNVT…VRGQGYRVIT (99 aa)) is a DNA-binding region (ompR/PhoB-type).

Post-translationally, phosphorylated by HssS.

It is found in the cytoplasm. Functionally, member of the two-component regulatory system HssS/HssR involved in intracellular heme homeostasis and tempering of staphylococcal virulence. Phosphorylated HssR binds to a direct repeat sequence within hrtAB promoter and activates the expression of hrtAB, an efflux pump, in response to extracellular heme, hemin, hemoglobin or blood. This Staphylococcus haemolyticus (strain JCSC1435) protein is Heme response regulator HssR (hssR).